Here is a 209-residue protein sequence, read N- to C-terminus: 8-oxoguanine DNA glycosylase/AP lyase (209 aa).

Residues K131 and D149 contribute to the active site.

The protein belongs to the type-2 OGG1 family.

The enzyme catalyses 2'-deoxyribonucleotide-(2'-deoxyribose 5'-phosphate)-2'-deoxyribonucleotide-DNA = a 3'-end 2'-deoxyribonucleotide-(2,3-dehydro-2,3-deoxyribose 5'-phosphate)-DNA + a 5'-end 5'-phospho-2'-deoxyribonucleoside-DNA + H(+). Its function is as follows. Catalyzes the excision of an oxidatively damaged form of guanine (7,8-dihydro-8-oxoguanine = 8-oxoG) from DNA. Also cleaves the DNA backbone at apurinic/apyrimidinic sites (AP sites). The chain is 8-oxoguanine DNA glycosylase/AP lyase from Korarchaeum cryptofilum (strain OPF8).